The following is a 343-amino-acid chain: Protein RecA (343 aa).

64–71 (GPESSGKT) provides a ligand contact to ATP.

The protein belongs to the RecA family.

It is found in the cytoplasm. In terms of biological role, can catalyze the hydrolysis of ATP in the presence of single-stranded DNA, the ATP-dependent uptake of single-stranded DNA by duplex DNA, and the ATP-dependent hybridization of homologous single-stranded DNAs. It interacts with LexA causing its activation and leading to its autocatalytic cleavage. This chain is Protein RecA, found in Cereibacter sphaeroides (strain ATCC 17023 / DSM 158 / JCM 6121 / CCUG 31486 / LMG 2827 / NBRC 12203 / NCIMB 8253 / ATH 2.4.1.) (Rhodobacter sphaeroides).